The primary structure comprises 185 residues: Large ribosomal subunit protein uL5 (185 aa).

Belongs to the universal ribosomal protein uL5 family. In terms of assembly, part of the 50S ribosomal subunit; part of the 5S rRNA/L5/L18/L25 subcomplex. Contacts the 5S rRNA and the P site tRNA. Forms a bridge to the 30S subunit in the 70S ribosome.

This is one of the proteins that bind and probably mediate the attachment of the 5S RNA into the large ribosomal subunit, where it forms part of the central protuberance. In the 70S ribosome it contacts protein S13 of the 30S subunit (bridge B1b), connecting the 2 subunits; this bridge is implicated in subunit movement. Contacts the P site tRNA; the 5S rRNA and some of its associated proteins might help stabilize positioning of ribosome-bound tRNAs. The sequence is that of Large ribosomal subunit protein uL5 from Bartonella henselae (strain ATCC 49882 / DSM 28221 / CCUG 30454 / Houston 1) (Rochalimaea henselae).